Here is a 252-residue protein sequence, read N- to C-terminus: uncharacterized protein (252 aa).

It belongs to the LarE family.

This is an uncharacterized protein from Methanocaldococcus jannaschii (strain ATCC 43067 / DSM 2661 / JAL-1 / JCM 10045 / NBRC 100440) (Methanococcus jannaschii).